Reading from the N-terminus, the 2434-residue chain is ATP-binding cassette sub-family A member 2 (2434 aa).

Asparagine 14 carries N-linked (GlcNAc...) asparagine glycosylation. A run of 2 helical transmembrane segments spans residues 22 to 42 (PWVL…LLGL) and 54 to 74 (AFYT…QSLC). N-linked (GlcNAc...) asparagine glycosylation is found at asparagine 89, asparagine 168, and asparagine 173. Glutamine 271 is subject to N5-methylglutamine. N-linked (GlcNAc...) asparagine glycosylation is found at asparagine 305, asparagine 368, asparagine 379, asparagine 420, asparagine 432, asparagine 476, asparagine 484, asparagine 494, asparagine 530, asparagine 549, asparagine 590, asparagine 600, and asparagine 628. Residues 354 to 369 (RAPAPQAGSPSGPANS) show a composition bias toward low complexity. The tract at residues 354–396 (RAPAPQAGSPSGPANSTGVGANTGPNTTVEEGTQSPVTPASPD) is disordered. The span at 370–396 (TGVGANTGPNTTVEEGTQSPVTPASPD) shows a compositional bias: polar residues. A run of 6 helical transmembrane segments spans residues 699-719 (FLFV…VYSV), 750-770 (VAWF…LTAI), 782-802 (VLII…FCFL), 813-833 (ASAC…YVAI), 857-877 (AFGL…GIQW), and 893-913 (LLAV…TWYI). The ABC transporter 1 domain occupies 990–1221 (VCVDKLTKVY…YGDGYRLTLV (232 aa)). 1024-1031 (GHNGAGKT) lines the ATP pocket. The disordered stretch occupies residues 1225 to 1246 (AEPGTSQEPGMASSPSGRPQLS). Over residues 1228–1246 (GTSQEPGMASSPSGRPQLS) the composition is skewed to polar residues. Serine 1238 carries the post-translational modification Phosphoserine. Asparagine 1247 carries N-linked (GlcNAc...) asparagine glycosylation. Phosphoserine occurs at positions 1327 and 1331. Residues 1461–1481 (ILLPAFFVCVAMTVALSVPEI) form a helical membrane-spanning segment. N-linked (GlcNAc...) asparagine glycosylation is found at asparagine 1496, asparagine 1549, and asparagine 1557. The disordered stretch occupies residues 1587–1606 (NFVPPPPSPAPSDSPLSPDE). Over residues 1589–1598 (VPPPPSPAPS) the composition is skewed to pro residues. Residues asparagine 1613, asparagine 1678, and asparagine 1776 are each glycosylated (N-linked (GlcNAc...) asparagine). 5 helical membrane passes run 1793–1813 (VVIA…FVVF), 1842–1862 (VWDM…LFVF), 1873–1893 (FPAV…IMYP), 1906–1926 (VFLI…TFLL), and 1992–2012 (GLVA…MCQY). Residues 2051–2286 (VKIENLTKVY…FGDGYMITVR (236 aa)) form the ABC transporter 2 domain. Asparagine 2055 carries N-linked (GlcNAc...) asparagine glycosylation. An ATP-binding site is contributed by 2088 to 2095 (GVNGAGKT). Residue threonine 2411 is modified to Phosphothreonine.

It belongs to the ABC transporter superfamily. ABCA family. Post-translationally, N-glycosylated. In terms of processing, methylated at Gln-271 by N6AMT1. As to expression, expressed at high levels in brain, at moderate levels in heart, kidney and lung, and at low levels in skeletal muscle, stomach, spleen, colon and pancreas. Not detected in the liver or small intestine. In brain, highly expressed in white matter and detected in oligodendrocytes. Expressed in cerebellum as well as the anterior commissure. Expressed mainly in the white matter but is also scattered in gray matter throughout the whole brain. Expressed in myelinating cells of both ventral and dorsal restricted regions in newborn spinal cord. Expressed in non-myelin-forming as well as in myelin-forming Schwann cells in the sciatic nerve.

Its subcellular location is the endosome membrane. It localises to the lysosome membrane. Functionally, probable transporter, its natural substrate has not been found yet. May have a role in macrophage lipid metabolism and neural development. May play a role in myelination, perhaps as a transporter for certain kinds of myelin chemical components. May play an important role in gamma-secretase processing of APP and thus in amyloid-beta peptide generation. Regulates esterification of plasma membrane cholesterol by modulation of sphingolipid metabolism. Its function is as follows. Probable lipid transporter that modulates cholesterol sequestration in the late endosome/lysosome by regulating the intracellular sphingolipid metabolism, in turn participates in cholesterol homeostasis. May alter the transbilayer distribution of ceramide in the intraluminal membrane lipid bilayer, favoring its retention in the outer leaflet that results in increased acid ceramidase activity in the late endosome/lysosome, facilitating ceramide deacylation to sphingosine leading to the sequestration of free cholesterol in lysosomes. In addition regulates amyloid-beta production either by activating a signaling pathway that regulates amyloid precursor protein transcription through the modulation of sphingolipid metabolism or through its role in gamma-secretase processing of APP. May play a role in myelin formation. This is ATP-binding cassette sub-family A member 2 from Rattus norvegicus (Rat).